The chain runs to 507 residues: Tabersonine/lochnericine 19-hydroxylase (507 aa).

Residues 8-28 (FFVLLLPFFIGIAFIYKLWNF) traverse the membrane as a helical segment. Asn167 carries N-linked (GlcNAc...) asparagine glycosylation. Cys447 contacts heme.

This sequence belongs to the cytochrome P450 family. It depends on heme as a cofactor. In terms of tissue distribution, confined to roots.

Its subcellular location is the endoplasmic reticulum membrane. It catalyses the reaction (-)-tabersonine + reduced [NADPH--hemoprotein reductase] + O2 = (-)-(R)-19-hydroxytabersonine + oxidized [NADPH--hemoprotein reductase] + H2O + H(+). The catalysed reaction is lochnericine + reduced [NADPH--hemoprotein reductase] + O2 = horhammericine + oxidized [NADPH--hemoprotein reductase] + H2O + H(+). It carries out the reaction (-)-vincadifformine + reduced [NADPH--hemoprotein reductase] + O2 = (-)-minovincinine + oxidized [NADPH--hemoprotein reductase] + H2O + H(+). The protein operates within alkaloid biosynthesis. Its function is as follows. Component of the monoterpenoid indole alkaloids (MIAs, e.g. echitovenine, tabersonine, lochnericine, 19-hydroxytabersonine and horhammericine) biosynthetic pathway; MIAs are used in cancer treatment and other medical applications. Cytochrome P450 catalyzing the conversion of (-)-tabersonine to 19-hydroxytabersonine, of lochnericine to horhammericine and of (-)-vincadifformine to (-)-minovincinine. The sequence is that of Tabersonine/lochnericine 19-hydroxylase from Catharanthus roseus (Madagascar periwinkle).